We begin with the raw amino-acid sequence, 222 residues long: 2-C-methyl-D-erythritol 4-phosphate cytidylyltransferase (222 aa).

The protein belongs to the IspD/TarI cytidylyltransferase family. IspD subfamily.

It carries out the reaction 2-C-methyl-D-erythritol 4-phosphate + CTP + H(+) = 4-CDP-2-C-methyl-D-erythritol + diphosphate. Its pathway is isoprenoid biosynthesis; isopentenyl diphosphate biosynthesis via DXP pathway; isopentenyl diphosphate from 1-deoxy-D-xylulose 5-phosphate: step 2/6. In terms of biological role, catalyzes the formation of 4-diphosphocytidyl-2-C-methyl-D-erythritol from CTP and 2-C-methyl-D-erythritol 4-phosphate (MEP). In Thermotoga maritima (strain ATCC 43589 / DSM 3109 / JCM 10099 / NBRC 100826 / MSB8), this protein is 2-C-methyl-D-erythritol 4-phosphate cytidylyltransferase.